A 104-amino-acid chain; its full sequence is Large ribosomal subunit protein bL28 (104 aa).

Belongs to the bacterial ribosomal protein bL28 family.

In Wolbachia pipientis wMel, this protein is Large ribosomal subunit protein bL28.